Reading from the N-terminus, the 2364-residue chain is Cytotoxin-L (2364 aa).

Residues 1-91 (MSLVNKAQLQ…EVLELKNNSL (91 aa)) form a four-helical bundle region. In terms of domain architecture, GT44 spans 96-468 (KNLHFIWIGG…APDVRSTINL (373 aa)). Residues 96 to 468 (KNLHFIWIGG…APDVRSTINL (373 aa)) are glucosyltransferase region. UDP-alpha-D-glucose-binding positions include 101–103 (IWI), Asn139, 265–270 (LAAASD), and 286–288 (DVD). The Mg(2+) site is built by Asp288, Glu515, and Ser518. 518-520 (SLW) lines the UDP-alpha-D-glucose pocket. The tract at residues 544–799 (GEDDILDFSQ…KSKNLHELST (256 aa)) is autoprocessing region. Zn(2+)-binding residues include Glu545 and Asp546. A Peptidase C80 domain is found at 567 to 774 (SSSMRTPNKE…EESIIKDISS (208 aa)). Positions 577, 600, and 647 each coordinate 1D-myo-inositol hexakisphosphate. Position 653 (His653) interacts with Zn(2+). The For protease activity role is filled by His653. Cys698 acts as the Nucleophile; for protease activity in catalysis. Residue His757 coordinates Zn(2+). 1D-myo-inositol hexakisphosphate is bound by residues Lys764, Lys775, and Lys792. Residues 800 to 1500 (LLQEIKNNSN…ESIIRNIYMP (701 aa)) form a translocation region region. 5 interaction with host SEMA6A and SEMA6B regions span residues 1433-1438 (CIKLIE), 1466-1471 (DNETKY), 1484-1495 (FTAEFSNESIIR), 1504-1511 (NLFIYSSK), and 1596-1601 (YNNLDP). 19 Cell wall-binding repeats span residues 1833–1852 (VSGL…PKNN), 1854–1873 (ITGF…TKSG), 1876–1895 (SIGE…QGIL), 1926–1945 (FIGK…NYRA), 1946–1965 (AVEW…KTGE), 1967–1986 (LKGL…NGIM), 1987–2006 (QTGF…DGVM), 2007–2026 (QVGY…NGER), 2057–2076 (YNGI…SNTA), 2077–2097 (VVGW…NTAE), 2099–2118 (CIGL…NGIR), 2119–2138 (QLGF…SGKI), 2139–2158 (ELGY…SGLV), 2209–2224 (ETGW…YFDP), 2227–2249 (KKAY…NGIM), 2250–2269 (KTGL…DGKM), 2270–2289 (QFGY…DGKM), 2320–2339 (YTGW…EYIA), and 2340–2359 (ATSS…DTAE). Residues 1835–2364 (GLIYINDSLY…PDTAELVVSE (530 aa)) are receptor-binding (CROPS) region.

The protein belongs to the clostridial glucosylating toxin (LCGT) family. In terms of assembly, homomultimer; forms an inactive homomultimer at pH 8, which dissociates at pH 4, leading to cytotoxicity. Interacts with host SEMA6A; interaction promotes toxin entry into host cell. Interacts with host SEMA6B; interaction promotes toxin entry into host cell. Zn(2+) serves as cofactor. Mn(2+) is required as a cofactor. Requires Mg(2+) as cofactor. In terms of processing, undergoes autocatalytic cleavage to release the N-terminal part (Glucosyltransferase TcsL), which constitutes the active part of the toxin, in the host cytosol. 1D-myo-inositol hexakisphosphate-binding (InsP6) activates the peptidase C80 domain and promotes autoprocessing.

It localises to the secreted. The protein resides in the host endosome membrane. The protein localises to the host cytoplasm. It is found in the host cytosol. Its subcellular location is the host cell membrane. The catalysed reaction is L-threonyl-[protein] + UDP-alpha-D-glucose = 3-O-(alpha-D-glucosyl)-L-threonyl-[protein] + UDP + H(+). With respect to regulation, protease activity is activated upon binding to 1D-myo-inositol hexakisphosphate (InsP6), which induces conformational reorganization. Functionally, precursor of a cytotoxin that targets the vascular endothelium, inducing an anti-inflammatory effect and resulting in lethal toxic shock syndrome. TcsL constitutes the main toxin that mediates the pathology of P.sordellii infection, an anaerobic Gram-positive bacterium found in soil and in the gastrointestinal and vaginal tracts of animals and humans; although the majority of carriers are asymptomatic, pathogenic P.sordellii infections arise rapidly and are highly lethal. This form constitutes the precursor of the toxin: it enters into host cells and mediates autoprocessing to release the active toxin (Glucosyltransferase TcsL) into the host cytosol. Targets vascular endothelium by binding to the semaphorin proteins SEMA6A and SEMA6B, and enters host cells via clathrin-mediated endocytosis. Once entered into host cells, acidification in the endosome promotes the membrane insertion of the translocation region and formation of a pore, leading to translocation of the GT44 and peptidase C80 domains across the endosomal membrane. This activates the peptidase C80 domain and autocatalytic processing, releasing the N-terminal part (Glucosyltransferase TcsL), which constitutes the active part of the toxin, in the cytosol. Active form of the toxin, which is released into the host cytosol following autoprocessing and inactivates small GTPases. Acts by mediating monoglucosylation of small GTPases of the Ras (H-Ras/HRAS, K-Ras/KRAS and N-Ras/NRAS) family in host cells at the conserved threonine residue located in the switch I region ('Thr-37/35'), using UDP-alpha-D-glucose as the sugar donor. Does not catalyze monoglucosylation of Ral/RALA. Also able to catalyze monoglucosylation of some members of the Rho family (Rac1 and Rap2A), but with less efficiency than with Ras proteins. Monoglucosylation of host small GTPases completely prevents the recognition of the downstream effector, blocking the GTPases in their inactive form and leading to apoptosis. Induces an anti-inflammatory effect, mainly by inactivating Ras proteins which results in blockage of the cell cycle and killing of immune cells. The absence or moderate local inflammatory response allows C.sordellii spreading in deep tissues, production of toxin which is released in the general circulation and causes a toxic shock syndrome. The protein is Cytotoxin-L of Paraclostridium sordellii (Clostridium sordellii).